A 184-amino-acid polypeptide reads, in one-letter code: ATP synthase subunit delta (184 aa).

Belongs to the ATPase delta chain family. As to quaternary structure, F-type ATPases have 2 components, F(1) - the catalytic core - and F(0) - the membrane proton channel. F(1) has five subunits: alpha(3), beta(3), gamma(1), delta(1), epsilon(1). F(0) has three main subunits: a(1), b(2) and c(10-14). The alpha and beta chains form an alternating ring which encloses part of the gamma chain. F(1) is attached to F(0) by a central stalk formed by the gamma and epsilon chains, while a peripheral stalk is formed by the delta and b chains.

It is found in the cell inner membrane. F(1)F(0) ATP synthase produces ATP from ADP in the presence of a proton or sodium gradient. F-type ATPases consist of two structural domains, F(1) containing the extramembraneous catalytic core and F(0) containing the membrane proton channel, linked together by a central stalk and a peripheral stalk. During catalysis, ATP synthesis in the catalytic domain of F(1) is coupled via a rotary mechanism of the central stalk subunits to proton translocation. Its function is as follows. This protein is part of the stalk that links CF(0) to CF(1). It either transmits conformational changes from CF(0) to CF(1) or is implicated in proton conduction. This Rickettsia canadensis (strain McKiel) protein is ATP synthase subunit delta.